A 230-amino-acid polypeptide reads, in one-letter code: MRIKICGITKLDQGQAIAEIGATALGFICVPKSPRYITPENIKNIIQKLPINIDKIGVFVNPKIDLLSEIITNTQLNGIQLHGDESPEFCNQLRHSIPNNIEIIKALRIKSPQDLKKANIYENYIDTLLLDAYHPEKLGGTGKTLDWKIIEEFHPTSPWLLAGGLTPENVTKAIQKFILVSQTQIESNHKFNHNFCGIDLSSGVETAPGDKNLVKVRKLFSSLATLTMKK.

This sequence belongs to the TrpF family.

The enzyme catalyses N-(5-phospho-beta-D-ribosyl)anthranilate = 1-(2-carboxyphenylamino)-1-deoxy-D-ribulose 5-phosphate. Its pathway is amino-acid biosynthesis; L-tryptophan biosynthesis; L-tryptophan from chorismate: step 3/5. This Trichodesmium erythraeum (strain IMS101) protein is N-(5'-phosphoribosyl)anthranilate isomerase.